A 92-amino-acid chain; its full sequence is N(2)-fixation sustaining protein CowN (92 aa).

This sequence belongs to the CowN family.

Functionally, is required to sustain N(2)-dependent growth in the presence of low levels of carbon monoxide (CO). Probably acts by protecting the N(2) fixation ability of the nitrogenase complex, which is inactivated in the presence of CO. The polypeptide is N(2)-fixation sustaining protein CowN (Rhodopseudomonas palustris (strain BisA53)).